Reading from the N-terminus, the 719-residue chain is Aminodeoxychorismate synthase (719 aa).

The region spanning 5–199 (RTLLIDNYDS…RDLSLRAAGH (195 aa)) is the Glutamine amidotransferase type-1 domain. Cys86 functions as the Nucleophile in the catalytic mechanism. Active-site residues include His173 and Glu175. The interval 199 to 224 (HRPPHTERIPAPAPAPAPAPAPAPPA) is disordered. Positions 209 to 224 (APAPAPAPAPAPAPPA) are enriched in pro residues.

In the C-terminal section; belongs to the anthranilate synthase component I family.

The enzyme catalyses chorismate + L-glutamine = 4-amino-4-deoxychorismate + L-glutamate. It participates in antibiotic biosynthesis. Involved in pristinamycin I biosynthesis. Catalyzes the biosynthesis of 4-amino-4-deoxychorismate (ADC) from chorismate and glutamine. The polypeptide is Aminodeoxychorismate synthase (Streptomyces pristinaespiralis).